Consider the following 264-residue polypeptide: S-adenosylmethionine decarboxylase proenzyme (264 aa).

The active-site Schiff-base intermediate with substrate; via pyruvic acid is Ser112. Ser112 carries the post-translational modification Pyruvic acid (Ser); by autocatalysis. The active-site Proton acceptor; for processing activity is His117. The Proton donor; for catalytic activity role is filled by Cys140.

The protein belongs to the prokaryotic AdoMetDC family. Type 2 subfamily. As to quaternary structure, heterooctamer of four alpha and four beta chains arranged as a tetramer of alpha/beta heterodimers. It depends on pyruvate as a cofactor. In terms of processing, is synthesized initially as an inactive proenzyme. Formation of the active enzyme involves a self-maturation process in which the active site pyruvoyl group is generated from an internal serine residue via an autocatalytic post-translational modification. Two non-identical subunits are generated from the proenzyme in this reaction, and the pyruvate is formed at the N-terminus of the alpha chain, which is derived from the carboxyl end of the proenzyme. The post-translation cleavage follows an unusual pathway, termed non-hydrolytic serinolysis, in which the side chain hydroxyl group of the serine supplies its oxygen atom to form the C-terminus of the beta chain, while the remainder of the serine residue undergoes an oxidative deamination to produce ammonia and the pyruvoyl group blocking the N-terminus of the alpha chain.

The enzyme catalyses S-adenosyl-L-methionine + H(+) = S-adenosyl 3-(methylsulfanyl)propylamine + CO2. Its pathway is amine and polyamine biosynthesis; S-adenosylmethioninamine biosynthesis; S-adenosylmethioninamine from S-adenosyl-L-methionine: step 1/1. Its function is as follows. Catalyzes the decarboxylation of S-adenosylmethionine to S-adenosylmethioninamine (dcAdoMet), the propylamine donor required for the synthesis of the polyamines spermine and spermidine from the diamine putrescine. The protein is S-adenosylmethionine decarboxylase proenzyme of Photorhabdus laumondii subsp. laumondii (strain DSM 15139 / CIP 105565 / TT01) (Photorhabdus luminescens subsp. laumondii).